Reading from the N-terminus, the 289-residue chain is Xylosylprotein 4-beta-galactosyltransferase (289 aa).

Residues 1–6 (MKLKTR) lie on the Cytoplasmic side of the membrane. The chain crosses the membrane as a helical; Signal-anchor for type II membrane protein span at residues 7 to 27 (LILSGTILISLAACYFLVLLV). At 28 to 289 (LDLEITRDLM…DLNWTPYCKS (262 aa)) the chain is on the lumenal side. UDP-alpha-D-galactose is bound at residue 58–62 (PYRDR). N-linked (GlcNAc...) asparagine glycosylation is found at Asn-81 and Asn-90. UDP-alpha-D-galactose-binding positions include 97-99 (FNR), 123-124 (VD), Tyr-154, and Trp-184. Mn(2+) is bound at residue Asp-124. 186-189 (LEDD) contributes to the N-acetyl-D-glucosamine binding site. N-linked (GlcNAc...) asparagine glycosylation occurs at Asn-201. Residues 214–236 (NTFRHIHGPKRKRDYTPKKNDKN) form a disordered region. Basic residues predominate over residues 217–226 (RHIHGPKRKR). His-218 serves as a coordination point for Mn(2+). UDP-alpha-D-galactose is bound at residue 218 to 220 (HIH). Basic and acidic residues predominate over residues 227-236 (DYTPKKNDKN).

It belongs to the glycosyltransferase 7 family. It depends on Mn(2+) as a cofactor.

The protein resides in the membrane. The enzyme catalyses 3-O-(beta-D-xylosyl)-L-seryl-[protein] + UDP-alpha-D-galactose = 3-O-(beta-D-galactosyl-(1-&gt;4)-beta-D-xylosyl)-L-seryl-[protein] + UDP + H(+). Its pathway is protein modification; protein glycosylation. Glycosyltransferase required for the biosynthesis of the tetrasaccharide (GlcA-Gal-Gal-Xyl-)Ser core linker of heparan sulfate and chondroitin sulfate. Required for embryonic development. Involved in vulval epithelium invagination. Required for axon regeneration after injury. In Caenorhabditis elegans, this protein is Xylosylprotein 4-beta-galactosyltransferase (sqv-3).